We begin with the raw amino-acid sequence, 260 residues long: Repetitive secreted protein 1 (260 aa).

A signal peptide spans 1–20 (MKLSFTIVATAALVASCTFA).

Rsp1 is processed by the subtilisin-like endoprotease kex2. Cleavage by kex2 generates 11 peptides.

It is found in the secreted. In terms of biological role, repetitive secreted protein essential for pathogenic development. Hum3 and rsp1 together are pathogenicity proteins that share an essential function in early stages of the infection. The protein is Repetitive secreted protein 1 of Mycosarcoma maydis (Corn smut fungus).